Reading from the N-terminus, the 503-residue chain is ATP synthase subunit alpha (503 aa).

170-177 (GDRKTGKT) provides a ligand contact to ATP.

This sequence belongs to the ATPase alpha/beta chains family. F-type ATPases have 2 components, CF(1) - the catalytic core - and CF(0) - the membrane proton channel. CF(1) has five subunits: alpha(3), beta(3), gamma(1), delta(1), epsilon(1). CF(0) has four main subunits: a, b, b' and c.

It localises to the cellular thylakoid membrane. The catalysed reaction is ATP + H2O + 4 H(+)(in) = ADP + phosphate + 5 H(+)(out). In terms of biological role, produces ATP from ADP in the presence of a proton gradient across the membrane. The alpha chain is a regulatory subunit. This chain is ATP synthase subunit alpha, found in Rippkaea orientalis (strain PCC 8801 / RF-1) (Cyanothece sp. (strain PCC 8801)).